The primary structure comprises 168 residues: Phosphopantetheine adenylyltransferase (168 aa).

Threonine 11 provides a ligand contact to substrate. Residues 11 to 12 (TF) and histidine 19 each bind ATP. The substrate site is built by lysine 43, threonine 75, and arginine 89. ATP is bound by residues 90–92 (GIR), glutamate 100, and 125–131 (WSYMSSS).

Belongs to the bacterial CoaD family. Homohexamer. It depends on Mg(2+) as a cofactor.

It is found in the cytoplasm. The enzyme catalyses (R)-4'-phosphopantetheine + ATP + H(+) = 3'-dephospho-CoA + diphosphate. Its pathway is cofactor biosynthesis; coenzyme A biosynthesis; CoA from (R)-pantothenate: step 4/5. Its function is as follows. Reversibly transfers an adenylyl group from ATP to 4'-phosphopantetheine, yielding dephospho-CoA (dPCoA) and pyrophosphate. In Wigglesworthia glossinidia brevipalpis, this protein is Phosphopantetheine adenylyltransferase.